We begin with the raw amino-acid sequence, 318 residues long: Type II restriction enzyme HaeIII (318 aa).

The catalysed reaction is Endonucleolytic cleavage of DNA to give specific double-stranded fragments with terminal 5'-phosphates.. Its function is as follows. A P subtype restriction enzyme that recognizes the double-stranded sequence 5'-GGCC-3' and cleaves after G-2. The polypeptide is Type II restriction enzyme HaeIII (haeIIIR) (Haemophilus aegyptius).